Here is a 74-residue protein sequence, read N- to C-terminus: Protein kish-B (74 aa).

The first 22 residues, 1-22 (MTNVYSLDGILVFGLLFVCTCA), serve as a signal peptide directing secretion. Residues 23-52 (YFKKVPRLKTWLLSEKKGVWGVFYKAAVIG) are Extracellular-facing. Residues 53-73 (TRLHAAVAIACVVMAFYVLFI) traverse the membrane as a helical segment. A topological domain (cytoplasmic) is located at residue Lys74.

The protein belongs to the KISH family.

The protein resides in the golgi apparatus membrane. Its function is as follows. Involved in the early part of the secretory pathway. The polypeptide is Protein kish-B (TMEM167B) (Homo sapiens (Human)).